The following is a 252-amino-acid chain: MQICLMDETGATDGALSVLAARWGLEHDEDNPMALVLTPQHLELRKRDEPKLGGIFVDFVGGAMAHRRKFGGGRGEAVAKAVGIKGDYLPDVVDATAGLGRDAFVLASVGCRVRMLERNPVVAALLDDGLTRGYADADIGGWLQERLQLIHASSLTALTDITPRPQVVYLDPMFPHRQKSALVKKEMRVFQSLVGPDLDADGLLEPARQLATKRVVVKRPDYAPPLADVATPNAIVTKGHRFDIYAGTPLTE.

S-adenosyl-L-methionine-binding positions include arginine 101–aspartate 102, glutamate 117–arginine 118, serine 153–serine 154, and aspartate 171.

This sequence belongs to the methyltransferase superfamily. RsmJ family.

It localises to the cytoplasm. It catalyses the reaction guanosine(1516) in 16S rRNA + S-adenosyl-L-methionine = N(2)-methylguanosine(1516) in 16S rRNA + S-adenosyl-L-homocysteine + H(+). Specifically methylates the guanosine in position 1516 of 16S rRNA. This Salmonella dublin (strain CT_02021853) protein is Ribosomal RNA small subunit methyltransferase J.